The following is a 208-amino-acid chain: Probable GTP-binding protein EngB (208 aa).

The 183-residue stretch at 23-205 (LTSEMVVLGR…RQTLLKYLLT (183 aa)) folds into the EngB-type G domain. GTP-binding positions include 31 to 38 (GRSNVGKS), 57 to 61 (GKTRL), 84 to 87 (DLPG), 154 to 157 (TKFD), and 182 to 184 (FNA). Positions 38 and 59 each coordinate Mg(2+).

This sequence belongs to the TRAFAC class TrmE-Era-EngA-EngB-Septin-like GTPase superfamily. EngB GTPase family. Mg(2+) serves as cofactor.

Its function is as follows. Necessary for normal cell division and for the maintenance of normal septation. The chain is Probable GTP-binding protein EngB from Helicobacter acinonychis (strain Sheeba).